Reading from the N-terminus, the 266-residue chain is uncharacterized protein (266 aa).

This is an uncharacterized protein from Acanthamoeba polyphaga (Amoeba).